Consider the following 387-residue polypeptide: MNNFNLHTPTRILFGKGAIAGLREQIPHDARVLITYGGGSVKKTGVLDQVLDALKGMDVLEFGGIEPNPAYETLMNAVKLVREQKVTFLLAVGGGSVLDGTKFIAAAANYPENIDPWHILQTGGKEIKSAIPMGCVLTLPATGSESNAGAVISRKTTGDKQAFHSAHVQPVFAVLDPVYTYTLPPRQVANGVVDAFVHTVEQYVTKPVDAKIQDRFAEGILLTLIEDGPKALKEPENYDVRANVMWAATQALNGLIGAGVPQDWATHMLGHELTAMHGLDHAQTLAIVLPALWNEKRDTKRAKLLQYAERVWNITEGSDDERIDAAIAATRNFFEQLGVPTHLSDYGLDGSSIPALLKKLEEHGMTQLGENHDITLDVSRRIYEAAR.

NADP(+) contacts are provided by Gly-38, Ser-40, Asn-68, Gly-95, Ser-96, Asp-99, Thr-138, Asn-147, Gly-149, Lys-160, Tyr-179, and Thr-182. Asp-194, His-198, His-267, and His-281 together coordinate Zn(2+).

It belongs to the iron-containing alcohol dehydrogenase family. As to quaternary structure, homodimer. The crystals contain two dimers in the asymmetric unit. The cofactor is Zn(2+).

It catalyses the reaction a primary alcohol + NADP(+) = an aldehyde + NADPH + H(+). The enzyme catalyses butan-1-ol + NADP(+) = butanal + NADPH + H(+). The catalysed reaction is 1-propanol + NADP(+) = propanal + NADPH + H(+). It carries out the reaction allyl alcohol + NADP(+) = acrolein + NADPH + H(+). Its function is as follows. Exhibits NADPH-dependent reductase activity for a broad range of short-chain aldehydes. Shows highest catalytic efficiency toward butanal, propanal and the highly toxic aldehydes acrolein and malondialdehyde (MDA), which are produced mainly during lipid peroxidation. Mediates resistance to reactive oxygen species (ROS) elicitors, such as paraquat and potassium tellurite, probably by protecting the cell against the toxic effects of reactive aldehydes derived from membrane lipid peroxidation. Also acts, with lower efficiency, on acetaldehyde, glyceraldehyde, glycolaldehyde, methylglyoxal, glyoxal and hydroxyacetone. Could be involved in glyoxal metabolism, by catalyzing the reduction of glyoxal to glycolaldehyde, and further to 1,2-ethandiol. Catalyzes the reduction of isobutyraldehyde (2-methylpropanal) to isobutanol, and probably contributes to the production of isobutanol. Can probably catalyze the reduction of glutaraldehyde, a widely used biocide, to 1,5-pentanediol, which is non-toxic. Overexpression of YqhD protects the cells against glutaraldehyde toxicity. Can catalyze in vitro the NADPH-dependent reduction of furfural, a natural product of lignocellulosic decomposition, to the less toxic product, furfuryl alcohol. However, it is unlikely that furfural is a physiological substrate. In terms of biological role, in contrast, Sulzenbacher et al. detected significant activities only in the presence of alcohol and NADP(+). They reported in vitro NADP(+)-dependent alcohol dehydrogenase (ADH) activity towards various alcohols, with a preference for alcohols longer than C(3), but the affinity for the substrates is poor, suggesting that these compounds are not the physiological substrates. Perez et al. did not detect dehydrogenase activity with short and medium chain alcohols such as methanol, ethanol, propanol, butanol or isopropanol. The chain is NADPH-dependent aldehyde reductase YqhD (yqhD) from Escherichia coli (strain K12).